The primary structure comprises 747 residues: Small G protein signaling modulator 3 (747 aa).

Positions 111 to 302 (GVPHSMRPQL…RLWDLFFYEG (192 aa)) constitute a Rab-GAP TBC domain. Ser403 carries the phosphoserine modification. Positions 412–435 (EDDLEAMKAKNIKQTELVADLREA) form a coiled coil. An SH3 domain is found at 477-536 (GHPRRAKALLDFERHDDDELGFRKNDIITIVSQKDEHCWVGELNGLRGWFPAKFVEVLDE). The RUN domain maps to 552–715 (GVTDLVRGTL…FAFSLSQDWE (164 aa)).

It belongs to the small G protein signaling modulator family. In terms of assembly, interacts with GJA1. Interaction with GJA1 induces its degradation. Interacts via its RUN domain with the C-terminal region of NF2. Interacts with RAB3A, RAB4A, RAB5A, RAB8A, RAB11A, RAP1A, RAP1B, RAP2A, RAP2B and PDCD6I. No interaction with RAB27A.

Its subcellular location is the cytoplasm. Functionally, may play a cooperative role in NF2-mediated growth suppression of cells. In Bos taurus (Bovine), this protein is Small G protein signaling modulator 3.